The chain runs to 437 residues: Adenylosuccinate synthetase (437 aa).

Residues 12–18 and 40–42 each bind GTP; these read GDEGKGK and GHT. The active-site Proton acceptor is the Asp13. Residues Asp13 and Gly40 each contribute to the Mg(2+) site. IMP-binding positions include 13 to 16, 38 to 41, Thr128, Arg142, Gln223, Thr238, and Arg302; these read DEGK and NAGH. His41 (proton donor) is an active-site residue. A substrate-binding site is contributed by 298–304; that stretch reads TTTGRRR. GTP is bound by residues Arg304, 330 to 332, and 412 to 414; these read KLD and SLG.

It belongs to the adenylosuccinate synthetase family. In terms of assembly, homodimer. Requires Mg(2+) as cofactor.

It localises to the cytoplasm. The catalysed reaction is IMP + L-aspartate + GTP = N(6)-(1,2-dicarboxyethyl)-AMP + GDP + phosphate + 2 H(+). Its pathway is purine metabolism; AMP biosynthesis via de novo pathway; AMP from IMP: step 1/2. In terms of biological role, plays an important role in the de novo pathway of purine nucleotide biosynthesis. Catalyzes the first committed step in the biosynthesis of AMP from IMP. The sequence is that of Adenylosuccinate synthetase from Parasynechococcus marenigrum (strain WH8102).